Reading from the N-terminus, the 55-residue chain is Large ribosomal subunit protein bL33 (55 aa).

Belongs to the bacterial ribosomal protein bL33 family.

The chain is Large ribosomal subunit protein bL33 from Xanthomonas axonopodis pv. citri (strain 306).